The chain runs to 156 residues: Endoribonuclease YbeY (156 aa).

3 residues coordinate Zn(2+): histidine 122, histidine 126, and histidine 132.

It belongs to the endoribonuclease YbeY family. Requires Zn(2+) as cofactor.

Its subcellular location is the cytoplasm. In terms of biological role, single strand-specific metallo-endoribonuclease involved in late-stage 70S ribosome quality control and in maturation of the 3' terminus of the 16S rRNA. The chain is Endoribonuclease YbeY from Syntrophomonas wolfei subsp. wolfei (strain DSM 2245B / Goettingen).